A 141-amino-acid polypeptide reads, in one-letter code: uncharacterized protein (141 aa).

In terms of domain architecture, HTH marR-type spans 4-139 (RTQMMYDMET…LIELFSKLDK (136 aa)). The H-T-H motif DNA-binding region spans 53 to 76 (VTEFAPILEVSASHITAVTDALVE).

This is an uncharacterized protein from Bacillus subtilis (strain 168).